The chain runs to 238 residues: Probable transcriptional regulatory protein MGAS10750_Spy0264 (238 aa).

The protein belongs to the TACO1 family. YeeN subfamily.

It localises to the cytoplasm. The protein is Probable transcriptional regulatory protein MGAS10750_Spy0264 of Streptococcus pyogenes serotype M4 (strain MGAS10750).